Here is a 152-residue protein sequence, read N- to C-terminus: Transcriptional regulator MraZ (152 aa).

SpoVT-AbrB domains are found at residues V5–E52 and A81–Q124.

It belongs to the MraZ family. As to quaternary structure, forms oligomers.

Its subcellular location is the cytoplasm. The protein resides in the nucleoid. The protein is Transcriptional regulator MraZ of Actinobacillus pleuropneumoniae serotype 5b (strain L20).